We begin with the raw amino-acid sequence, 155 residues long: Transcriptional repressor NrdR (155 aa).

The segment covering 1–11 has biased composition (polar residues); that stretch reads MECPNCHQNAS. The disordered stretch occupies residues 1-22; it reads MECPNCHQNASRVIDSRPSDEN. Residues 3–34 fold into a zinc finger; sequence CPNCHQNASRVIDSRPSDENRAIRRRRECENC. An ATP-cone domain is found at 49-139; that stretch reads LLVVKNDGTR…IYREFKDMSS (91 aa).

Belongs to the NrdR family. Zn(2+) serves as cofactor.

Its function is as follows. Negatively regulates transcription of bacterial ribonucleotide reductase nrd genes and operons by binding to NrdR-boxes. The chain is Transcriptional repressor NrdR from Lactobacillus acidophilus (strain ATCC 700396 / NCK56 / N2 / NCFM).